Reading from the N-terminus, the 447-residue chain is Phosphoglucosamine mutase (447 aa).

Ser-100 acts as the Phosphoserine intermediate in catalysis. Mg(2+) is bound by residues Ser-100, Asp-239, Asp-241, and Asp-243. Position 100 is a phosphoserine (Ser-100).

It belongs to the phosphohexose mutase family. The cofactor is Mg(2+). Post-translationally, activated by phosphorylation.

It catalyses the reaction alpha-D-glucosamine 1-phosphate = D-glucosamine 6-phosphate. Catalyzes the conversion of glucosamine-6-phosphate to glucosamine-1-phosphate. In Thermoanaerobacter sp. (strain X514), this protein is Phosphoglucosamine mutase.